The primary structure comprises 750 residues: MIIRSPEPEVKILVDRDPVKTSFEEWARPGHFSRTIAKGPDTTTWIWNLHADAHDFDSHTSDLEEISRKVFSAHFGQLSIIFLWLSGMYFHGARFSNYEAWLSDPTHIGPSAQVVWPIVGQEILNGDVGGGFRGIQITSGFFQLWRASGITSELQLYCTAIGALVFAALMLFAGWFHYHKAAPKLAWFQDVESMLNHHLAGLLGLGSLSWAGHQVHVSLPINQFLNAGVDPKEIPLPHEFILNRDLLAQLYPSFAEGATPFFTLNWSKYADFLTFRGGLDPVTGGLWLTDIAHHHLAIAILFLIAGHMYRTNWGIGHGLKDILEAHKGPFTGQGHKGLYEILTTSWHAQLSLNLAMLGSLTIVVAHHMYSMPPYPYLATDYGTQLSLFTHHMWIGGFLIVGAAAHAAIFMVRDYDPTTRYNDLLDRVLRHRDAIISHLNWACIFLGFHSFGLYIHNDTMSALGRPQDMFSDTAIQLQPVFAQWIQNTHALAPGATAPGATASTSLTWGGGDLVAVGGKVALLPIPLGTADFLVHHIHAFTIHVTVLILLKGVLFARSSRLIPDKANLGFRFPCDGPGRGGTCQVSAWDHVFLGLFWMYNSISVVIFHFSWKMQSDVWGSVSDQGVVTHITGGNFAQSSITINGWLRDFLWAQASQVIQSYGSSLSAYGLFFLGAHFVWAFSLMFLFSGRGYWQELIESIVWAHNKLKVAPATQPRALSIIQGRAVGVTHYLLGGIATTWAFFLARIIAVG.

8 consecutive transmembrane segments (helical) span residues 70-93, 156-179, 195-219, 291-309, 346-369, 385-411, 433-455, and 531-549; these read VFSA…FHGA, LYCT…FHYH, LNHH…HVSL, IAHH…GHMY, WHAQ…HHMY, LSLF…IFMV, AIIS…LYIH, and FLVH…LILL. The [4Fe-4S] cluster site is built by C573 and C582. 2 helical membrane passes run 589–610 and 664–686; these read HVFL…HFSW and LSAY…MFLF. Residue H675 participates in chlorophyll a' binding. Chlorophyll a-binding residues include M683 and Y691. Residue W692 coordinates phylloquinone. The helical transmembrane segment at 724-744 threads the bilayer; sequence AVGVTHYLLGGIATTWAFFLA.

Belongs to the PsaA/PsaB family. As to quaternary structure, the PsaA/B heterodimer binds the P700 chlorophyll special pair and subsequent electron acceptors. PSI consists of a core antenna complex that captures photons, and an electron transfer chain that converts photonic excitation into a charge separation. The eukaryotic PSI reaction center is composed of at least 11 subunits. P700 is a chlorophyll a/chlorophyll a' dimer, A0 is one or more chlorophyll a, A1 is one or both phylloquinones and FX is a shared 4Fe-4S iron-sulfur center. serves as cofactor.

It localises to the plastid. Its subcellular location is the chloroplast thylakoid membrane. The catalysed reaction is reduced [plastocyanin] + hnu + oxidized [2Fe-2S]-[ferredoxin] = oxidized [plastocyanin] + reduced [2Fe-2S]-[ferredoxin]. PsaA and PsaB bind P700, the primary electron donor of photosystem I (PSI), as well as the electron acceptors A0, A1 and FX. PSI is a plastocyanin-ferredoxin oxidoreductase, converting photonic excitation into a charge separation, which transfers an electron from the donor P700 chlorophyll pair to the spectroscopically characterized acceptors A0, A1, FX, FA and FB in turn. Oxidized P700 is reduced on the lumenal side of the thylakoid membrane by plastocyanin. The protein is Photosystem I P700 chlorophyll a apoprotein A1 of Solanum bulbocastanum (Wild potato).